The sequence spans 86 residues: Cell division protein ZapA (86 aa).

The protein belongs to the ZapA family. Type 2 subfamily. In terms of assembly, homodimer. Interacts with FtsZ.

The protein resides in the cytoplasm. Activator of cell division through the inhibition of FtsZ GTPase activity, therefore promoting FtsZ assembly into bundles of protofilaments necessary for the formation of the division Z ring. It is recruited early at mid-cell but it is not essential for cell division. The protein is Cell division protein ZapA of Oceanobacillus iheyensis (strain DSM 14371 / CIP 107618 / JCM 11309 / KCTC 3954 / HTE831).